A 41-amino-acid chain; its full sequence is Large ribosomal subunit protein bL36 (41 aa).

It belongs to the bacterial ribosomal protein bL36 family.

The protein is Large ribosomal subunit protein bL36 of Granulibacter bethesdensis (strain ATCC BAA-1260 / CGDNIH1).